Here is a 127-residue protein sequence, read N- to C-terminus: Large ribosomal subunit protein bL12c (127 aa).

The interval 104–127 (GVAKDAAEEAKKQIEDAGGKASLK) is disordered. Positions 105–121 (VAKDAAEEAKKQIEDAG) are enriched in basic and acidic residues.

The protein belongs to the bacterial ribosomal protein bL12 family. Homodimer. Part of the ribosomal stalk of the 50S ribosomal subunit. Forms a multimeric L10(L12)X complex, where L10 forms an elongated spine to which 2 to 4 L12 dimers bind in a sequential fashion. Binds GTP-bound translation factors.

Its subcellular location is the plastid. The protein resides in the chloroplast. Functionally, forms part of the ribosomal stalk which helps the ribosome interact with GTP-bound translation factors. Is thus essential for accurate translation. The polypeptide is Large ribosomal subunit protein bL12c (Trieres chinensis (Marine centric diatom)).